Here is a 317-residue protein sequence, read N- to C-terminus: Sperm acrosome membrane-associated protein 6 (317 aa).

The signal sequence occupies residues 1-18; it reads MFVFIAKLLIFSSVITSA. Topologically, residues 19–281 are extracellular; sequence FTCYQCFIDE…PSFSFWLPRP (263 aa). Disulfide bonds link cysteine 21–cysteine 143, cysteine 24–cysteine 146, cysteine 35–cysteine 51, cysteine 128–cysteine 151, and cysteine 132–cysteine 157. A glycan (N-linked (GlcNAc...) asparagine) is linked at asparagine 29. An Ig-like domain is found at 123-237; sequence PRVSGCLPPC…EVLSQEQSLV (115 aa). Asparagine 168 carries N-linked (GlcNAc...) asparagine glycosylation. Cysteine 174 and cysteine 227 are oxidised to a cystine. Residues 282 to 302 traverse the membrane as a helical segment; that stretch reads ALLITCLTATMLLIFLSLGAM. Over 303–317 the chain is Cytoplasmic; it reads CRLWYQIRTNVSNPA.

This sequence belongs to the SPACA6 family. In terms of assembly, forms a complex with izumo1 and tmem81 on spermatocyte cell membrane. The complex binds to oocyte protein bncr. Expressed in testis.

It is found in the cytoplasmic vesicle. It localises to the secretory vesicle. The protein localises to the acrosome membrane. Sperm protein required for fusion of sperm with the egg membrane during fertilization. May regulate the expression of sperm surface protein DCST2. The polypeptide is Sperm acrosome membrane-associated protein 6 (Danio rerio (Zebrafish)).